The primary structure comprises 274 residues: NADPH-dependent 7-cyano-7-deazaguanine reductase (274 aa).

80 to 82 (VES) contacts substrate. An NADPH-binding site is contributed by 82–83 (SK). C181 serves as the catalytic Thioimide intermediate. D188 serves as the catalytic Proton donor. 220–221 (HE) lines the substrate pocket. 249-250 (RG) provides a ligand contact to NADPH.

The protein belongs to the GTP cyclohydrolase I family. QueF type 2 subfamily. In terms of assembly, homodimer.

It localises to the cytoplasm. The catalysed reaction is 7-aminomethyl-7-carbaguanine + 2 NADP(+) = 7-cyano-7-deazaguanine + 2 NADPH + 3 H(+). It functions in the pathway tRNA modification; tRNA-queuosine biosynthesis. Catalyzes the NADPH-dependent reduction of 7-cyano-7-deazaguanine (preQ0) to 7-aminomethyl-7-deazaguanine (preQ1). The polypeptide is NADPH-dependent 7-cyano-7-deazaguanine reductase (Burkholderia lata (strain ATCC 17760 / DSM 23089 / LMG 22485 / NCIMB 9086 / R18194 / 383)).